Here is a 946-residue protein sequence, read N- to C-terminus: Structure-specific endonuclease subunit SLX4 (946 aa).

A compositionally biased stretch (pro residues) spans 1-14; that stretch reads MPASPLPALSPPAS. 7 disordered regions span residues 1-35, 54-119, 147-318, 339-399, 416-471, 577-748, and 765-799; these read MPASPLPALSPPASPRRNTSGASALGSRKADIPPD, QHFD…EEAV, PSDE…GGFT, ADSA…AAQL, TKVP…PKHI, FPLL…GSGR, and ALSPTPPRIHNFENSQPLPLYSVSPTRAKKPKADS. A compositionally biased stretch (basic and acidic residues) spans 54–74; that stretch reads QHFDDDIAGKDQEQSRKKSPE. 2 stretches are compositionally biased toward basic residues: residues 160–169 and 182–195; these read KAGKPRKPRA and KPKRTRVTKPKAAK. Over residues 278–287 the composition is skewed to basic and acidic residues; the sequence is AVSRRRDWTP. Positions 453-469 are enriched in basic residues; it reads SKARSKKASTKAAAKPK. Residues 627–636 are compositionally biased toward basic and acidic residues; sequence KANDEPDHVM. A compositionally biased stretch (polar residues) spans 707 to 717; that stretch reads KSQSAIATSGS. A compositionally biased stretch (basic and acidic residues) spans 722–733; it reads KEPKRTKGKEVK.

The protein belongs to the SLX4 family. In terms of assembly, forms a heterodimer with SLX1. Post-translationally, phosphorylated in response to DNA damage.

Its subcellular location is the nucleus. Its function is as follows. Regulatory subunit of the SLX1-SLX4 structure-specific endonuclease that resolves DNA secondary structures generated during DNA repair and recombination. Has endonuclease activity towards branched DNA substrates, introducing single-strand cuts in duplex DNA close to junctions with ss-DNA. The polypeptide is Structure-specific endonuclease subunit SLX4 (Phaeosphaeria nodorum (strain SN15 / ATCC MYA-4574 / FGSC 10173) (Glume blotch fungus)).